Here is a 150-residue protein sequence, read N- to C-terminus: Seminal ribonuclease (150 aa).

Positions 1–26 are cleaved as a signal peptide; it reads MALKSLVVLPLLVLVLLLVRVQPSLG. Residues Lys33 and Arg36 each contribute to the substrate site. The active-site Proton acceptor is the His38. 4 disulfides stabilise this stretch: Cys52–Cys110, Cys66–Cys121, Cys84–Cys136, and Cys91–Cys98. Substrate contacts are provided by residues 67 to 71 and Lys92; that span reads KPVNT. Deamidated asparagine; by deterioration is present on Asn93. Arg111 is a substrate binding site. His145 serves as the catalytic Proton donor.

Belongs to the pancreatic ribonuclease family. As to quaternary structure, homodimer; disulfide-linked. Seminal plasma. Can reach 3% of the protein content of this fluid.

It localises to the secreted. The enzyme catalyses an [RNA] containing cytidine + H2O = an [RNA]-3'-cytidine-3'-phosphate + a 5'-hydroxy-ribonucleotide-3'-[RNA].. It carries out the reaction an [RNA] containing uridine + H2O = an [RNA]-3'-uridine-3'-phosphate + a 5'-hydroxy-ribonucleotide-3'-[RNA].. With respect to regulation, allosteric regulation by both substrate and reaction products. In terms of biological role, this enzyme hydrolyzes both single- and double-stranded RNA. This is Seminal ribonuclease (SRN) from Bos taurus (Bovine).